Consider the following 421-residue polypeptide: C2H2 type master regulator of conidiophore development brlA (421 aa).

2 C2H2-type zinc fingers span residues F309–H333 and H339–H364. Positions E379–D421 are disordered.

It localises to the nucleus. Its function is as follows. BrlA, abaA and wetA are pivotal regulators of conidiophore development and conidium maturation. They act individually and together to regulate their own expression and that of numerous other sporulation-specific genes. Binds promoters of target genes at brlA response elements (BREs) containing the conserved sequence 5'-(C/A)(A/G)AGGG(G/A)-3'. Required for conidiophores formation. Controls expression of abaA. The sequence is that of C2H2 type master regulator of conidiophore development brlA from Aspergillus oryzae (strain ATCC 42149 / RIB 40) (Yellow koji mold).